The chain runs to 453 residues: tRNA modification GTPase MnmE (453 aa).

Arg-22, Glu-79, and Lys-119 together coordinate (6S)-5-formyl-5,6,7,8-tetrahydrofolate. Residues 215–376 enclose the TrmE-type G domain; that stretch reads GMKVVIAGRP…LRQHLKECMG (162 aa). K(+) is bound at residue Asn-225. GTP is bound by residues 225-230, 244-250, 269-272, and 334-337; these read NAGKSS, TDIAGTT, DTAG, and NKAD. Ser-229 lines the Mg(2+) pocket. K(+)-binding residues include Thr-244, Ile-246, and Thr-249. Thr-250 provides a ligand contact to Mg(2+). Lys-453 provides a ligand contact to (6S)-5-formyl-5,6,7,8-tetrahydrofolate.

Belongs to the TRAFAC class TrmE-Era-EngA-EngB-Septin-like GTPase superfamily. TrmE GTPase family. In terms of assembly, homodimer. Heterotetramer of two MnmE and two MnmG subunits. Requires K(+) as cofactor.

The protein localises to the cytoplasm. Its function is as follows. Exhibits a very high intrinsic GTPase hydrolysis rate. Involved in the addition of a carboxymethylaminomethyl (cmnm) group at the wobble position (U34) of certain tRNAs, forming tRNA-cmnm(5)s(2)U34. The sequence is that of tRNA modification GTPase MnmE from Vibrio cholerae serotype O1 (strain ATCC 39541 / Classical Ogawa 395 / O395).